A 1576-amino-acid chain; its full sequence is eIF-2-alpha kinase GCN2 (1576 aa).

The RWD domain maps to 16-127 (NEIEALKAIF…SIVQDYLNDW (112 aa)). Positions 180 to 204 (QDELQRRSYETPQSSSKKKTNSKET) are disordered. Protein kinase domains lie at 235–511 (VLPL…HVIR) and 556–928 (FEEL…EEFI). Residues 562-570 (LGRGGFGEV) and lysine 585 each bind ATP. Residues 673 to 714 (YNSSADEEDPEASDISFQYSNTSDKEGSSDKDSSIEEASSVK) are disordered. The segment covering 695-706 (SDKEGSSDKDSS) has biased composition (basic and acidic residues). Residue aspartate 772 is the Proton acceptor of the active site.

This sequence belongs to the protein kinase superfamily. Ser/Thr protein kinase family. GCN2 subfamily. Homodimer; homodimerization is important for kinase activation by uncharged tRNAs. Interacts (via N-terminal RWD domain) with gcn1 (via N- and C-terminus); this interaction stimulates gcn2 kinase activity in a gcn20-dependent manner in response to amino acid starvation. Interacts (via N-terminus) with the gcn1-gcn20 complex on translating ribosomes in amino acid-starved cells; gcn1 may bind near the ribosomal A-site and promotes the transfer of uncharged tRNAs from the A-site to the tRNA-binding domain in gcn2 for its subsequent kinase activation, and hence allowing fil1 translational activation and derepression of amino acid biosynthetic genes. Post-translationally, autophosphorylated.

Its subcellular location is the cytoplasm. The catalysed reaction is L-seryl-[protein] + ATP = O-phospho-L-seryl-[protein] + ADP + H(+). It catalyses the reaction L-threonyl-[protein] + ATP = O-phospho-L-threonyl-[protein] + ADP + H(+). The integrated stress response (ISR) is activated in response to conditions that promote ribosome collisions: gcn1, which acts as a ribosome collision sensor, activates gcn2. The RQC pathway and the integrated stress response (ISR) antagonize each other: hel2 prevents the activation of gcn2, while gcn2 suppresses RQC activation. Ribosome stalling-induced integrated stress response prefers ribosomes with empty A sites. The kinase activity is stimulated upon binding to uncharged tRNAs. Metabolic-stress sensing protein kinase that phosphorylates the alpha subunit of eukaryotic translation initiation factor 2 (eIF-2-alpha/SUI2) on 'Ser-52' in response to low amino acid, carbon, or purine availability. Required for adapatation to nutrient starvation by acting as a key component of the integrated stress response (ISR), by which cells alter their translational and transcriptional output in response to starvation. Converts phosphorylated eIF-2-alpha/SUI2 either to a competitive inhibitor of translation initiation factor eIF-2B, leading to a global protein synthesis repression, and thus to a reduced overall utilization of amino acids, or to a translational initiation activation of specific mRNAs, such as the transcriptional activator GCN4, and hence allowing GCN4-mediated reprogramming of transcription to alleviate nutrient depletion. Binds uncharged tRNAs. This chain is eIF-2-alpha kinase GCN2, found in Schizosaccharomyces pombe (strain 972 / ATCC 24843) (Fission yeast).